Here is a 497-residue protein sequence, read N- to C-terminus: SPI-2 type 3 secretion system secretin (497 aa).

The signal sequence occupies residues 1–20; sequence MVVNKRLILILLFILNTAKS.

Belongs to the bacterial secretin family. T3SS SctC subfamily. The core secretion machinery of the T3SS is composed of approximately 20 different proteins, including cytoplasmic components, a base, an export apparatus and a needle. This subunit is part of the base, which anchors the injectisome in the bacterial cell envelope. Forms a stable homooligomeric complex.

Its subcellular location is the cell outer membrane. Its function is as follows. Component of the type III secretion system (T3SS), also called injectisome, which is used to inject bacterial effector proteins into eukaryotic host cells. Forms a ring-shaped multimeric structure with an apparent central pore in the outer membrane. Required for secretion of some type III-secreted effectors including the SpvB exotoxin. The sequence is that of SPI-2 type 3 secretion system secretin from Salmonella typhimurium (strain 14028s / SGSC 2262).